Reading from the N-terminus, the 519-residue chain is Maturase K (519 aa).

This sequence belongs to the intron maturase 2 family. MatK subfamily.

The protein localises to the plastid. It is found in the chloroplast. Its function is as follows. Usually encoded in the trnK tRNA gene intron. Probably assists in splicing its own and other chloroplast group II introns. The protein is Maturase K of Keteleeria davidiana (David's keteleeria).